A 161-amino-acid polypeptide reads, in one-letter code: Lipoprotein signal peptidase (161 aa).

3 consecutive transmembrane segments (helical) span residues 9-29 (ISLL…WLIT), 63-83 (KMLF…IFYI), and 88-108 (FNLF…GNFI). Active-site residues include Asp118 and Asp136. The helical transmembrane segment at 131-151 (IFNIADSSLTIGVIFVIITLI) threads the bilayer.

It belongs to the peptidase A8 family.

It is found in the cell membrane. The catalysed reaction is Release of signal peptides from bacterial membrane prolipoproteins. Hydrolyzes -Xaa-Yaa-Zaa-|-(S,diacylglyceryl)Cys-, in which Xaa is hydrophobic (preferably Leu), and Yaa (Ala or Ser) and Zaa (Gly or Ala) have small, neutral side chains.. It participates in protein modification; lipoprotein biosynthesis (signal peptide cleavage). In terms of biological role, this protein specifically catalyzes the removal of signal peptides from prolipoproteins. This is Lipoprotein signal peptidase from Staphylococcus epidermidis (strain ATCC 35984 / DSM 28319 / BCRC 17069 / CCUG 31568 / BM 3577 / RP62A).